The chain runs to 84 residues: MPKKAASPEIKAASFETSLSELEQIVTRLESGELPLEDALNEFERGVQLVRQGQQTLLQAEQRVQILLSDDVDAPLKPFTPDTE.

Belongs to the XseB family. In terms of assembly, heterooligomer composed of large and small subunits.

The protein localises to the cytoplasm. It catalyses the reaction Exonucleolytic cleavage in either 5'- to 3'- or 3'- to 5'-direction to yield nucleoside 5'-phosphates.. Its function is as follows. Bidirectionally degrades single-stranded DNA into large acid-insoluble oligonucleotides, which are then degraded further into small acid-soluble oligonucleotides. This chain is Exodeoxyribonuclease 7 small subunit, found in Yersinia pseudotuberculosis serotype O:3 (strain YPIII).